The following is a 569-amino-acid chain: Glutamate--tRNA ligase (569 aa).

Residues 110–120 (PNPNGPPTLGS) carry the 'HIGH' region motif.

Belongs to the class-I aminoacyl-tRNA synthetase family. Glutamate--tRNA ligase type 2 subfamily.

Its subcellular location is the cytoplasm. The catalysed reaction is tRNA(Glu) + L-glutamate + ATP = L-glutamyl-tRNA(Glu) + AMP + diphosphate. Its function is as follows. Catalyzes the attachment of glutamate to tRNA(Glu) in a two-step reaction: glutamate is first activated by ATP to form Glu-AMP and then transferred to the acceptor end of tRNA(Glu). This is Glutamate--tRNA ligase from Methanococcoides burtonii (strain DSM 6242 / NBRC 107633 / OCM 468 / ACE-M).